Here is a 299-residue protein sequence, read N- to C-terminus: Large ribosomal subunit protein uL18 (299 aa).

Belongs to the universal ribosomal protein uL18 family. Component of the large ribosomal subunit (LSU).

The protein resides in the cytoplasm. It localises to the nucleus. In terms of biological role, component of the ribosome, a large ribonucleoprotein complex responsible for the synthesis of proteins in the cell. The small ribosomal subunit (SSU) binds messenger RNAs (mRNAs) and translates the encoded message by selecting cognate aminoacyl-transfer RNA (tRNA) molecules. The large subunit (LSU) contains the ribosomal catalytic site termed the peptidyl transferase center (PTC), which catalyzes the formation of peptide bonds, thereby polymerizing the amino acids delivered by tRNAs into a polypeptide chain. The nascent polypeptides leave the ribosome through a tunnel in the LSU and interact with protein factors that function in enzymatic processing, targeting, and the membrane insertion of nascent chains at the exit of the ribosomal tunnel. In Bombyx mori (Silk moth), this protein is Large ribosomal subunit protein uL18 (RpL5).